A 434-amino-acid chain; its full sequence is Alpha-enolase (434 aa).

S40 is a Mg(2+) binding site. Substrate contacts are provided by H158 and E167. Catalysis depends on E210, which acts as the Proton donor. The Mg(2+) site is built by D245, E293, and D318. Positions 293 and 318 each coordinate substrate. Catalysis depends on K343, which acts as the Proton acceptor. Substrate contacts are provided by residues 370-373 (SHRS) and K394.

The protein belongs to the enolase family. Homodimer. Mg(2+) serves as cofactor.

The protein localises to the cytoplasm. It carries out the reaction (2R)-2-phosphoglycerate = phosphoenolpyruvate + H2O. The protein operates within carbohydrate degradation; glycolysis; pyruvate from D-glyceraldehyde 3-phosphate: step 4/5. The polypeptide is Alpha-enolase (Alligator mississippiensis (American alligator)).